A 1221-amino-acid chain; its full sequence is Putative DNA-directed RNA polymerase II subunit RPB2 homolog (1221 aa).

2 stretches are compositionally biased toward low complexity: residues 1 to 54 (MSRG…SASS) and 692 to 701 (PAPSSSPSDS). Disordered regions lie at residues 1 to 63 (MSRG…PMSE) and 673 to 701 (RGSG…PSDS). A Mg(2+)-binding site is contributed by Asp-823. Zn(2+) contacts are provided by Cys-1174, Cys-1177, Cys-1187, and Cys-1190. A C4-type zinc finger spans residues 1174-1190 (CKECGRISDHFEYCRMC).

This sequence belongs to the RNA polymerase beta chain family.

It carries out the reaction RNA(n) + a ribonucleoside 5'-triphosphate = RNA(n+1) + diphosphate. In terms of biological role, component of the DNA-dependent RNA polymerase that catalyzes the transcription of DNA into RNA using the four ribonucleoside triphosphates as substrates. Second largest component of RNA polymerase II which synthesizes mRNA precursors and many functional non-coding RNAs. Proposed to contribute to the polymerase catalytic activity and forms the polymerase active center together with the largest subunit. In Dryophytes versicolor (chameleon treefrog), this protein is Putative DNA-directed RNA polymerase II subunit RPB2 homolog.